We begin with the raw amino-acid sequence, 330 residues long: MSDAPIATSSEVTQSPADYDPTKKQKSAEKTARIPIKIVPAEKLKKPDWIRVKAATGNSRFYEIKDILRANNLVTVCEEASCPNIGECFGKGTATFMIMGDKCTRRCPFCDVGHGRPDPLDVNEPGNLARTIAQLKLNYVVITSVDRDDLRDGGAQHYVDCISQTRELSPNTRIEVLVPDFRGRLDRALDILQACPPDVMNHNMETVPRLYKQARPGADYAHSLKLLQDFKRRNPNVPTKSGLMVGLGETDEEILDVMRDMRAHDIDMLTIGQYLAPSNHHLPVTRYVHPDTFKMFEEEAYKMGFTHAAVGAMVRSSYHADQQAHQAGFA.

A disordered region spans residues 1–31; that stretch reads MSDAPIATSSEVTQSPADYDPTKKQKSAEKT. The span at 7-16 shows a compositional bias: polar residues; sequence ATSSEVTQSP. A compositionally biased stretch (basic and acidic residues) spans 20 to 31; the sequence is DPTKKQKSAEKT. [4Fe-4S] cluster contacts are provided by cysteine 77, cysteine 82, cysteine 88, cysteine 103, cysteine 107, cysteine 110, and serine 317. Residues 88–306 form the Radical SAM core domain; it reads CFGKGTATFM…EEEAYKMGFT (219 aa).

It belongs to the radical SAM superfamily. Lipoyl synthase family. It depends on [4Fe-4S] cluster as a cofactor.

The protein localises to the cytoplasm. The catalysed reaction is [[Fe-S] cluster scaffold protein carrying a second [4Fe-4S](2+) cluster] + N(6)-octanoyl-L-lysyl-[protein] + 2 oxidized [2Fe-2S]-[ferredoxin] + 2 S-adenosyl-L-methionine + 4 H(+) = [[Fe-S] cluster scaffold protein] + N(6)-[(R)-dihydrolipoyl]-L-lysyl-[protein] + 4 Fe(3+) + 2 hydrogen sulfide + 2 5'-deoxyadenosine + 2 L-methionine + 2 reduced [2Fe-2S]-[ferredoxin]. It participates in protein modification; protein lipoylation via endogenous pathway; protein N(6)-(lipoyl)lysine from octanoyl-[acyl-carrier-protein]: step 2/2. Functionally, catalyzes the radical-mediated insertion of two sulfur atoms into the C-6 and C-8 positions of the octanoyl moiety bound to the lipoyl domains of lipoate-dependent enzymes, thereby converting the octanoylated domains into lipoylated derivatives. This chain is Lipoyl synthase, found in Cupriavidus metallidurans (strain ATCC 43123 / DSM 2839 / NBRC 102507 / CH34) (Ralstonia metallidurans).